The primary structure comprises 187 residues: ATP synthase subunit delta (187 aa).

The protein belongs to the ATPase delta chain family. In terms of assembly, F-type ATPases have 2 components, F(1) - the catalytic core - and F(0) - the membrane proton channel. F(1) has five subunits: alpha(3), beta(3), gamma(1), delta(1), epsilon(1). F(0) has three main subunits: a(1), b(2) and c(10-14). The alpha and beta chains form an alternating ring which encloses part of the gamma chain. F(1) is attached to F(0) by a central stalk formed by the gamma and epsilon chains, while a peripheral stalk is formed by the delta and b chains.

It is found in the cell membrane. Functionally, f(1)F(0) ATP synthase produces ATP from ADP in the presence of a proton or sodium gradient. F-type ATPases consist of two structural domains, F(1) containing the extramembraneous catalytic core and F(0) containing the membrane proton channel, linked together by a central stalk and a peripheral stalk. During catalysis, ATP synthesis in the catalytic domain of F(1) is coupled via a rotary mechanism of the central stalk subunits to proton translocation. Its function is as follows. This protein is part of the stalk that links CF(0) to CF(1). It either transmits conformational changes from CF(0) to CF(1) or is implicated in proton conduction. This Mesomycoplasma hyopneumoniae (strain J / ATCC 25934 / NCTC 10110) (Mycoplasma hyopneumoniae) protein is ATP synthase subunit delta.